A 507-amino-acid polypeptide reads, in one-letter code: Extracellular elastase (507 aa).

Residues 1–28 (MKNFSKFALTSIAALTVASPLVNTEVDA) form the signal peptide. Residues 29–207 (KDKVSATQNI…VVDKLNMIKE (179 aa)) constitute a propeptide that is removed on maturation. Asp-347 lines the Ca(2+) pocket. His-351 contacts Zn(2+). Glu-352 is a catalytic residue. Zn(2+)-binding residues include His-355 and Glu-375. Ca(2+) contacts are provided by Asp-386, Glu-388, Asp-389, Leu-391, Glu-394, Tyr-397, Thr-398, Val-401, and Asp-404. His-435 (proton donor) is an active-site residue.

It belongs to the peptidase M4 family. The cofactor is Ca(2+). Zn(2+) is required as a cofactor.

Its subcellular location is the secreted. Functionally, protease that has a low substrate specificity. Glucagon is preferentially cleaved between aromatic (Phe) and hydrophobic (Val) amino acids. Hydrolyzes casein and elastin. The chain is Extracellular elastase (sepA) from Staphylococcus epidermidis (strain ATCC 12228 / FDA PCI 1200).